Reading from the N-terminus, the 253-residue chain is 3-deoxy-manno-octulosonate cytidylyltransferase (253 aa).

The protein belongs to the KdsB family.

It localises to the cytoplasm. It carries out the reaction 3-deoxy-alpha-D-manno-oct-2-ulosonate + CTP = CMP-3-deoxy-beta-D-manno-octulosonate + diphosphate. It functions in the pathway nucleotide-sugar biosynthesis; CMP-3-deoxy-D-manno-octulosonate biosynthesis; CMP-3-deoxy-D-manno-octulosonate from 3-deoxy-D-manno-octulosonate and CTP: step 1/1. It participates in bacterial outer membrane biogenesis; lipopolysaccharide biosynthesis. Functionally, activates KDO (a required 8-carbon sugar) for incorporation into bacterial lipopolysaccharide in Gram-negative bacteria. This is 3-deoxy-manno-octulosonate cytidylyltransferase from Neisseria meningitidis serogroup B (strain ATCC BAA-335 / MC58).